The chain runs to 150 residues: MPLDVWIAFSYFIDFFQWLFMLNAEVMRAIAVNDTLAEKTAESIYYISGFLKYFSDVFRDTVNIVSANDTMMRYSVGIWQKVAGNATYVFGDDNANWGIAYIWRKSYECIQTGGYCQNQAPNLTYNALQFFKWMFAALAELGKKFSLIYT.

The signal sequence occupies residues 1–28 (MPLDVWIAFSYFIDFFQWLFMLNAEVMR).

This is an uncharacterized protein from Archaeoglobus fulgidus (strain ATCC 49558 / DSM 4304 / JCM 9628 / NBRC 100126 / VC-16).